The chain runs to 288 residues: MVSRVRLYFGYTKPKVWSLLVFVGVIGAIVAINRFTLTNILLILIATVSITLGSMGAEATTNYIDRDIDAIMDRTKKRPLVTGQIKPVKGLYFGLILMFLSIIILLFFSKYLAAVFMAIGLFDNVFIYSYLTKRRTPWNIILGGFSGGFPVVIGWYTVTNAFSVLPWFLFALVVIWIPIHVWSLAYRYRDDYNRARVPMMTSIQSDRISAICISSSAVILFIFSIIPVFFKAMPYTYMIVATIIAIPMLVYSVLFVRKPDRKSSLKLFIYSSPYLAIIFVLVLIFKYL.

9 helical membrane passes run 16–36, 37–57, 88–108, 111–131, 138–158, 162–182, 210–230, 236–256, and 265–285; these read VWSLLVFVGVIGAIVAINRFT, LTNILLILIATVSITLGSMGA, VKGLYFGLILMFLSIIILLFF, YLAAVFMAIGLFDNVFIYSYL, WNIILGGFSGGFPVVIGWYTV, FSVLPWFLFALVVIWIPIHVW, AICISSSAVILFIFSIIPVFF, TYMIVATIIAIPMLVYSVLFV, and LKLFIYSSPYLAIIFVLVLIF.

It belongs to the UbiA prenyltransferase family. Protoheme IX farnesyltransferase subfamily.

The protein resides in the cell membrane. The enzyme catalyses heme b + (2E,6E)-farnesyl diphosphate + H2O = Fe(II)-heme o + diphosphate. The protein operates within porphyrin-containing compound metabolism; heme O biosynthesis; heme O from protoheme: step 1/1. Its function is as follows. Converts heme B (protoheme IX) to heme O by substitution of the vinyl group on carbon 2 of heme B porphyrin ring with a hydroxyethyl farnesyl side group. The polypeptide is Protoheme IX farnesyltransferase (Thermoplasma volcanium (strain ATCC 51530 / DSM 4299 / JCM 9571 / NBRC 15438 / GSS1)).